Consider the following 294-residue polypeptide: 4-hydroxy-tetrahydrodipicolinate synthase (294 aa).

Thr-44 is a pyruvate binding site. Tyr-132 serves as the catalytic Proton donor/acceptor. Lys-161 (schiff-base intermediate with substrate) is an active-site residue. Residue Ile-206 participates in pyruvate binding.

The protein belongs to the DapA family. Homotetramer; dimer of dimers.

Its subcellular location is the cytoplasm. The enzyme catalyses L-aspartate 4-semialdehyde + pyruvate = (2S,4S)-4-hydroxy-2,3,4,5-tetrahydrodipicolinate + H2O + H(+). It participates in amino-acid biosynthesis; L-lysine biosynthesis via DAP pathway; (S)-tetrahydrodipicolinate from L-aspartate: step 3/4. Its function is as follows. Catalyzes the condensation of (S)-aspartate-beta-semialdehyde [(S)-ASA] and pyruvate to 4-hydroxy-tetrahydrodipicolinate (HTPA). In Thermotoga neapolitana (strain ATCC 49049 / DSM 4359 / NBRC 107923 / NS-E), this protein is 4-hydroxy-tetrahydrodipicolinate synthase.